We begin with the raw amino-acid sequence, 376 residues long: Glutamate 5-kinase (376 aa).

Residue lysine 15 participates in ATP binding. Residues serine 56, aspartate 143, and asparagine 155 each contribute to the substrate site. An ATP-binding site is contributed by serine 175–aspartate 176. In terms of domain architecture, PUA spans lysine 281–serine 358.

Belongs to the glutamate 5-kinase family.

The protein resides in the cytoplasm. The catalysed reaction is L-glutamate + ATP = L-glutamyl 5-phosphate + ADP. The protein operates within amino-acid biosynthesis; L-proline biosynthesis; L-glutamate 5-semialdehyde from L-glutamate: step 1/2. Catalyzes the transfer of a phosphate group to glutamate to form L-glutamate 5-phosphate. The chain is Glutamate 5-kinase from Rhodopseudomonas palustris (strain BisB5).